Here is a 410-residue protein sequence, read N- to C-terminus: Schlafen-like protein 1 (410 aa).

Disordered stretches follow at residues 1–20 and 141–199; these read MSLR…VMSQ and LHHR…SGVR. Polar residues predominate over residues 8 to 20; that stretch reads AQTQMWESPVMSQ. Residues 154–173 show a composition bias toward pro residues; sequence SHSPGPSPGPSPGLRHPPLP. 264–271 lines the ATP pocket; that stretch reads GVEDSGLV. Positions 370–401 form a coiled coil; that stretch reads QKWAMELGKLEEKVKVLTLEKEQLQQQLRQRQ.

The protein belongs to the Schlafen family. Subgroup I subfamily.

The chain is Schlafen-like protein 1 (Slfnl1) from Mus musculus (Mouse).